The following is a 268-amino-acid chain: Mediator of RNA polymerase II transcription subunit 8 (268 aa).

Residues 1-29 are a coiled coil; the sequence is MQREEKQLEASLDALLNQVADLKNSLGSF. At S82 the chain carries Phosphoserine. A coiled-coil region spans residues 133 to 163; the sequence is ADAAQKQIQSLNKMCSNLLEKISKEERESES. The interval 142-151 is interaction with the Elongin BC complex; it reads SLNKMCSNLL. Disordered stretches follow at residues 156 to 176 and 193 to 268; these read KEERESESGGLRPNKQTFNPG and NWRP…PYQR. The segment covering 200–209 has biased composition (gly residues); sequence SGPGQPGQPG.

It belongs to the Mediator complex subunit 8 family. In terms of assembly, component of the Mediator complex, which is composed of MED1, MED4, MED6, MED7, MED8, MED9, MED10, MED11, MED12, MED13, MED13L, MED14, MED15, MED16, MED17, MED18, MED19, MED20, MED21, MED22, MED23, MED24, MED25, MED26, MED27, MED29, MED30, MED31, CCNC, CDK8 and CDC2L6/CDK11. The MED12, MED13, CCNC and CDK8 subunits form a distinct module termed the CDK8 module. Mediator containing the CDK8 module is less active than Mediator lacking this module in supporting transcriptional activation. Individual preparations of the Mediator complex lacking one or more distinct subunits have been variously termed ARC, CRSP, DRIP, PC2, SMCC and TRAP. May be part of a multisubunit E3 ubiquitin-protein ligase complex with the Elongin BC complex (ELOB and ELOC), CUL2 and RBX1.

Its subcellular location is the nucleus. It functions in the pathway protein modification; protein ubiquitination. In terms of biological role, component of the Mediator complex, a coactivator involved in the regulated transcription of nearly all RNA polymerase II-dependent genes. Mediator functions as a bridge to convey information from gene-specific regulatory proteins to the basal RNA polymerase II transcription machinery. Mediator is recruited to promoters by direct interactions with regulatory proteins and serves as a scaffold for the assembly of a functional preinitiation complex with RNA polymerase II and the general transcription factors. May play a role as a target recruitment subunit in E3 ubiquitin-protein ligase complexes and thus in ubiquitination and subsequent proteasomal degradation of target proteins. In Mus musculus (Mouse), this protein is Mediator of RNA polymerase II transcription subunit 8 (Med8).